A 313-amino-acid polypeptide reads, in one-letter code: Platelet glycoprotein VI (313 aa).

The first 21 residues, 1–21 (MSPASPTFFCIGLCVLQVIQT), serve as a signal peptide directing secretion. Over 22–265 (QSGPLPKPSL…FGFAHQHYAK (244 aa)) the chain is Extracellular. 2 Ig-like C2-type domains span residues 27-105 (PKPS…DQLE) and 115-197 (PSLS…APSD). An intrachain disulfide couples Cys49 to Cys89. Asn93 is a glycosylation site (N-linked (GlcNAc...) asparagine). Cys135 and Cys181 are disulfide-bonded. Residues 213–236 (VPTEESFPVTESSRRPSILPTNKI) are disordered. N-linked (GlcNAc...) asparagine glycosylation occurs at Asn244. Residues 266 to 286 (GNLVRICLGATIIIILLGLLA) traverse the membrane as a helical segment. Residues 287–313 (EDWHSRKKCLQHRMRALQRPLPPLPLA) lie on the Cytoplasmic side of the membrane.

As to quaternary structure, associated with Fc receptor gamma chain. The GPVI:FcRgamma complex is associated with the Src kinase family FYN and LYN. Interacts with TRAF4. Interacts with COL1A1, but not with COL4A4. Megakaryocytes and platelets.

The protein localises to the cell membrane. Collagen receptor involved in collagen-induced platelet adhesion and activation. Plays a key role in platelet procoagulant activity and subsequent thrombin and fibrin formation. This procoagulant function may contribute to arterial and venous thrombus formation. The signaling pathway involves the FcR gamma-chain, the Src kinases (likely FYN or LYN) and SYK, the adapter protein LAT and leads to the activation of PLCG2. The sequence is that of Platelet glycoprotein VI from Mus musculus (Mouse).